The following is a 510-amino-acid chain: Serine/threonine-protein kinase RIO3 (510 aa).

Disordered regions lie at residues 100 to 126 and 143 to 191; these read GSSSSVHFTPDRYHPKTMQETDSENED and DEEN…DMVG. Composition is skewed to basic and acidic residues over residues 108 to 118 and 162 to 179; these read TPDRYHPKTMQ and TKHDTGVSGRRNADKTFN. In terms of domain architecture, Protein kinase spans 235 to 510; the sequence is LLLLKWINQG…RGISPAREYN (276 aa). ATP-binding positions include 241 to 249 and Lys-275; that span reads INQGVFDSV. Asp-388 (proton acceptor) is an active-site residue. Over residues 474-499 the composition is skewed to basic and acidic residues; the sequence is RSVDLRHDKSRPADMELKKYNEEKKA. The disordered stretch occupies residues 474-510; that stretch reads RSVDLRHDKSRPADMELKKYNEEKKANRGISPAREYN.

It belongs to the protein kinase superfamily. RIO-type Ser/Thr kinase family. Mg(2+) is required as a cofactor. In terms of tissue distribution, expressed in tail neurons (PVQ and PHAL/PQR).

It carries out the reaction L-seryl-[protein] + ATP = O-phospho-L-seryl-[protein] + ADP + H(+). It catalyses the reaction L-threonyl-[protein] + ATP = O-phospho-L-threonyl-[protein] + ADP + H(+). This chain is Serine/threonine-protein kinase RIO3 (riok-3), found in Caenorhabditis elegans.